Consider the following 83-residue polypeptide: Large ribosomal subunit protein eL31 (83 aa).

This sequence belongs to the eukaryotic ribosomal protein eL31 family.

This chain is Large ribosomal subunit protein eL31, found in Methanococcus vannielii (strain ATCC 35089 / DSM 1224 / JCM 13029 / OCM 148 / SB).